The sequence spans 198 residues: MNRFFKIVLTSTRRASTNGSGKRKTPFEGDKVHIPDEPYNSKVRFFICFKKKLKHGIQIDESLLSEMPPIDAKLISHLERLSLVRFDSEQAVANLRNSIRMAKRLELVDVEDVEPMHTVWESQECPTFDDVEEEPLPIDKVFRNAAVRFDDFFVTPPGNVPLESNERFDLNVINKWDTIGKPVAPEAKTIRLAEGRRK.

Belongs to the GatC family. In terms of assembly, subunit of the heterotrimeric GatCAB amidotransferase (AdT) complex, composed of A, B and C subunits.

The protein resides in the mitochondrion. The catalysed reaction is L-glutamyl-tRNA(Gln) + L-glutamine + ATP + H2O = L-glutaminyl-tRNA(Gln) + L-glutamate + ADP + phosphate + H(+). In terms of biological role, allows the formation of correctly charged Gln-tRNA(Gln) through the transamidation of misacylated Glu-tRNA(Gln) in the mitochondria. The reaction takes place in the presence of glutamine and ATP through an activated gamma-phospho-Glu-tRNA(Gln). The sequence is that of Glutamyl-tRNA(Gln) amidotransferase subunit C, mitochondrial from Caenorhabditis remanei (Caenorhabditis vulgaris).